Reading from the N-terminus, the 102-residue chain is Small ribosomal subunit protein uS10 (102 aa).

This sequence belongs to the universal ribosomal protein uS10 family. As to quaternary structure, part of the 30S ribosomal subunit.

Its function is as follows. Involved in the binding of tRNA to the ribosomes. The protein is Small ribosomal subunit protein uS10 of Saccharolobus islandicus (strain M.16.4 / Kamchatka #3) (Sulfolobus islandicus).